The following is a 223-amino-acid chain: Ribosomal RNA small subunit methyltransferase Nep1 (223 aa).

Residues G181, G186, and 199-204 contribute to the S-adenosyl-L-methionine site; that span reads LYREPL.

It belongs to the class IV-like SAM-binding methyltransferase superfamily. RNA methyltransferase NEP1 family. As to quaternary structure, homodimer.

It catalyses the reaction a pseudouridine in rRNA + S-adenosyl-L-methionine = an N(1)-methylpseudouridine in rRNA + S-adenosyl-L-homocysteine + H(+). Functionally, methyltransferase involved in ribosomal biogenesis. Specifically catalyzes the N1-methylation of the pseudouridine corresponding to position 914 in M.jannaschii 16S rRNA. The polypeptide is Ribosomal RNA small subunit methyltransferase Nep1 (Pyrococcus furiosus (strain ATCC 43587 / DSM 3638 / JCM 8422 / Vc1)).